Consider the following 340-residue polypeptide: Probable tRNA pseudouridine synthase B (340 aa).

Residue Asp-82 is the Nucleophile of the active site. The PUA domain occupies 250–325 (LPKVWIKDSA…IAVDVEKVFM (76 aa)).

The protein belongs to the pseudouridine synthase TruB family. Type 2 subfamily.

It carries out the reaction uridine(55) in tRNA = pseudouridine(55) in tRNA. In terms of biological role, could be responsible for synthesis of pseudouridine from uracil-55 in the psi GC loop of transfer RNAs. This chain is Probable tRNA pseudouridine synthase B, found in Pyrococcus furiosus (strain ATCC 43587 / DSM 3638 / JCM 8422 / Vc1).